The primary structure comprises 409 residues: MFLFSLTVLSALVLITESIPSVATDFPFFEITKKFDDIETYNNDYGILKFQEQEPMENLTCASCEAPSERECTLNQTAVVCDQDPNIACLTFEAFNNFTMTTTFRRGCFLSGILCENACRSFNASQDGNLTSCVQDCCNSSLCNAGSLPTEVTTEASTTAQETTATSTTTKQSTGASTTAEPSTTAAPSTTTKQTTVASTTATTTKPTTAPQTRATTLPTTAPTTAPAPIACGGVLRGRGTFTSPGFPGNYPNNVRCEWRVFLPRRQAIVFRIVSLDLADPGDSLEFFDSGRVIRTFRGLSRRKRSPSHRQTTNEKVLGEGEDGYYDDQEYVDYYYYDGRRKREPYFYQRRKKRRQQDRIVIQGRNQVAGAIFQSDAAGNAAGFSTQFVQGAADSESEASASSESSDED.

A signal peptide spans 1–18 (MFLFSLTVLSALVLITES). The span at 154-229 (TEASTTAQET…TTAPTTAPAP (76 aa)) shows a compositional bias: low complexity. The tract at residues 154-230 (TEASTTAQET…TAPTTAPAPI (77 aa)) is disordered. A disulfide bridge links C232 with C257. The CUB domain occupies 232 to 338 (CGGVLRGRGT…QEYVDYYYYD (107 aa)). The tract at residues 389 to 409 (VQGAADSESEASASSESSDED) is disordered. The segment covering 392–409 (AADSESEASASSESSDED) has biased composition (low complexity).

Component of the acid-insoluble and acid-soluble organic matrix of the aragonitic skeleton (at protein level).

The protein resides in the secreted. The protein is CUB domain-containing protein of Acropora millepora (Staghorn coral).